Consider the following 501-residue polypeptide: ATP synthase subunit alpha (501 aa).

ATP is bound at residue 169–176 (GDRQTGKT).

The protein belongs to the ATPase alpha/beta chains family. F-type ATPases have 2 components, CF(1) - the catalytic core - and CF(0) - the membrane proton channel. CF(1) has five subunits: alpha(3), beta(3), gamma(1), delta(1), epsilon(1). CF(0) has three main subunits: a(1), b(2) and c(9-12). The alpha and beta chains form an alternating ring which encloses part of the gamma chain. CF(1) is attached to CF(0) by a central stalk formed by the gamma and epsilon chains, while a peripheral stalk is formed by the delta and b chains.

It localises to the cell membrane. It catalyses the reaction ATP + H2O + 4 H(+)(in) = ADP + phosphate + 5 H(+)(out). In terms of biological role, produces ATP from ADP in the presence of a proton gradient across the membrane. The alpha chain is a regulatory subunit. The polypeptide is ATP synthase subunit alpha (Streptococcus equi subsp. zooepidemicus (strain H70)).